The following is a 481-amino-acid chain: Small ribosomal subunit protein bS1 (481 aa).

S1 motif domains lie at 36–105 (GDIV…LSKK), 123–188 (DEAV…LSRR), 209–277 (GAIR…LSLK), and 294–363 (GQIV…LSLK). The segment at 437 to 465 (ATEEAGHGSSEQPPASSTPSAKATGGSLA) is disordered. Over residues 445-457 (SSEQPPASSTPSA) the composition is skewed to polar residues.

It belongs to the bacterial ribosomal protein bS1 family.

Its function is as follows. Binds mRNA; thus facilitating recognition of the initiation point. It is needed to translate mRNA with a short Shine-Dalgarno (SD) purine-rich sequence. The protein is Small ribosomal subunit protein bS1 (rpsA) of Mycobacterium leprae (strain TN).